A 918-amino-acid chain; its full sequence is Hexokinase-1 (918 aa).

M1 is subject to N-acetylmethionine. Residues 1–10 (MIAAQLLAYY) form a mitochondrial-binding peptide (MBP) region. Hexokinase domains lie at 16–458 (DDQV…MVTA) and 464–906 (AEQH…LITA). ATP contacts are provided by residues R30 and 84 to 89 (DLGGSS). The interval 73–207 (DGSEKGDFIA…DYDANIVAVV (135 aa)) is hexokinase small subdomain 1. 84 to 91 (DLGGSSFR) contacts D-glucose 6-phosphate. Residues S155, 172–173 (TK), and 208–209 (ND) each bind D-glucose. The segment at 208-447 (NDTVGTMIDC…SDVRFLLSES (240 aa)) is hexokinase large subdomain 1. D-glucose 6-phosphate contacts are provided by D209 and T232. D-glucose is bound by residues N235, E260, and 291 to 294 (QRFE). S337 carries the phosphoserine modification. 413–415 (DGS) contacts D-glucose 6-phosphate. ATP-binding positions include 425–426 (RR) and 532–537 (DLGGTN). A hexokinase small subdomain 2 region spans residues 521–655 (DGTEDGDFLA…EFDLDVVAVV (135 aa)). Residue 532–536 (DLGGT) coordinates D-glucose 6-phosphate. D-glucose contacts are provided by residues 603 to 604 (SF), 620 to 621 (TK), and 656 to 657 (ND). The segment at 656 to 895 (NDTVGTMMTC…CNVSFLLSED (240 aa)) is hexokinase large subdomain 2. 2 residues coordinate D-glucose 6-phosphate: D657 and T680. Residue T680 coordinates ATP. D-glucose contacts are provided by residues 682 to 683 (SN), E708, and E742. Residues 747–748 (GI), 784–788 (TKFLS), and 863–867 (TLYKL) contribute to the ATP site. Residues 861 to 863 (DGT) and S897 each bind D-glucose 6-phosphate.

It belongs to the hexokinase family. As to quaternary structure, monomer. Interacts with RABL2/RABL2A; binds preferentially to GTP-bound RABL2. Interacts with VDAC1. The HK1-VDAC1 complex interacts with ATF2. Interacts (via N-terminal spermatogenic cell-specific region) with PFKM (via C-terminus). Interacts with SMAD5.

Its subcellular location is the mitochondrion outer membrane. It localises to the cytoplasm. It is found in the cytosol. The catalysed reaction is a D-hexose + ATP = a D-hexose 6-phosphate + ADP + H(+). It catalyses the reaction D-fructose + ATP = D-fructose 6-phosphate + ADP + H(+). It carries out the reaction D-glucose + ATP = D-glucose 6-phosphate + ADP + H(+). The enzyme catalyses D-mannose + ATP = D-mannose 6-phosphate + ADP + H(+). The catalysed reaction is D-glucosamine + ATP = D-glucosamine 6-phosphate + ADP + H(+). It participates in carbohydrate metabolism; hexose metabolism. The protein operates within carbohydrate degradation; glycolysis; D-glyceraldehyde 3-phosphate and glycerone phosphate from D-glucose: step 1/4. With respect to regulation, hexokinase is an allosteric enzyme inhibited by its product D-glucose 6-phosphate. Hexokinase activity is inhibited by N-acetyl-D-glucosamine. Catalyzes the phosphorylation of various hexoses, such as D-glucose, D-glucosamine, D-fructose, D-mannose and 2-deoxy-D-glucose, to hexose 6-phosphate (D-glucose 6-phosphate, D-glucosamine 6-phosphate, D-fructose 6-phosphate, D-mannose 6-phosphate and 2-deoxy-D-glucose 6-phosphate, respectively). Does not phosphorylate N-acetyl-D-glucosamine. Mediates the initial step of glycolysis by catalyzing phosphorylation of D-glucose to D-glucose 6-phosphate. Involved in innate immunity and inflammation by acting as a pattern recognition receptor for bacterial peptidoglycan. When released in the cytosol, N-acetyl-D-glucosamine component of bacterial peptidoglycan inhibits the hexokinase activity of HK1 and causes its dissociation from mitochondrial outer membrane, thereby activating the NLRP3 inflammasome. This is Hexokinase-1 from Bos taurus (Bovine).